A 36-amino-acid polypeptide reads, in one-letter code: Pancreatic polypeptide (36 aa).

Tyrosine 36 carries the tyrosine amide modification.

The protein belongs to the NPY family.

The protein resides in the secreted. Functionally, hormone secreted by pancreatic cells that acts as a regulator of pancreatic and gastrointestinal functions. This Anser anser anser (Western greylag goose) protein is Pancreatic polypeptide (PPY).